A 321-amino-acid chain; its full sequence is Basic endochitinase A (321 aa).

An N-terminal signal peptide occupies residues 1 to 19; it reads MGAFALFAVLAMAVTMAVA. The region spanning 20-60 is the Chitin-binding type-1 domain; the sequence is EQCGSQAGGATCPNCLCCSRFGWCGSTSDYCGDGCQSQCAG. 5 cysteine pairs are disulfide-bonded: C22–C37, C31–C43, C34–C61, C36–C50, and C54–C58. The tract at residues 62–79 is hinge region (Gly/Pro/Thr-rich); that stretch reads GGGGTPVTPTPTPSGGGG. Residues 80–321 form a catalytic region; sequence VSSIVSRALF…LDCYNQRPFA (242 aa). 3 disulfide bridges follow: C101-C163, C175-C183, and C301-C314. The Proton donor role is filled by E145.

It belongs to the glycosyl hydrolase 19 family. Chitinase class I subfamily. As to expression, localized in the aleurone cells of the seed endosperm (at protein level).

It carries out the reaction Random endo-hydrolysis of N-acetyl-beta-D-glucosaminide (1-&gt;4)-beta-linkages in chitin and chitodextrins.. Functionally, defense against chitin-containing fungal pathogens. Binds the hyphal tips, lateral walls and septa of fungi and degrades mature chitin. The sequence is that of Basic endochitinase A from Secale cereale (Rye).